The following is a 419-amino-acid chain: Putative competence-damage inducible protein (419 aa).

This sequence belongs to the CinA family.

This chain is Putative competence-damage inducible protein, found in Streptococcus agalactiae serotype Ia (strain ATCC 27591 / A909 / CDC SS700).